A 155-amino-acid polypeptide reads, in one-letter code: MRKLKPQKRQVLADPVYNSRLVTKLINAIMYDGKKGLAQSIIYSAFEIVEQKTGKPALEVFNKAIDNVMPIIELKVRRVGGSNFQVPTEVTPERRQTLGLRWITLYARLRHEHTMIEKLAHEIIDASNNVGAAIKKKEDTHKMAEANKAFAHLRW.

Belongs to the universal ribosomal protein uS7 family. Part of the 30S ribosomal subunit. Contacts proteins S9 and S11.

Functionally, one of the primary rRNA binding proteins, it binds directly to 16S rRNA where it nucleates assembly of the head domain of the 30S subunit. Is located at the subunit interface close to the decoding center, probably blocks exit of the E-site tRNA. This Ureaplasma parvum serovar 3 (strain ATCC 27815 / 27 / NCTC 11736) protein is Small ribosomal subunit protein uS7.